Here is a 311-residue protein sequence, read N- to C-terminus: uncharacterized protein (311 aa).

Helical transmembrane passes span 6-26 (IFIL…KMLA), 33-53 (PFQV…PMAV), 70-90 (YLAL…QFAV), 97-117 (TAAV…YFIL), 123-143 (GITI…FNPA), 155-175 (LIGI…TVIS), 185-205 (YVFN…LLVV), 219-239 (ILVL…CYLG), 244-264 (TSAV…TVLA), and 265-285 (ILIL…FIII). EamA domains are found at residues 12-141 (AIFY…IIFN) and 166-292 (VVWS…INYS).

The protein belongs to the EamA transporter family.

The protein localises to the cell membrane. This is an uncharacterized protein from Clostridium kluyveri (strain ATCC 8527 / DSM 555 / NBRC 12016 / NCIMB 10680 / K1).